Here is a 927-residue protein sequence, read N- to C-terminus: Protein translocase subunit SecA (927 aa).

Residues Gln86, 104 to 108, and Asp494 contribute to the ATP site; that span reads GEGKT. Residues 853–927 form a disordered region; that stretch reads YTAPDEDGTP…GSKAKRGKRR (75 aa). Over residues 860–879 the composition is skewed to basic and acidic residues; it reads GTPHAEVEAVDPGARERTSE. Residues 907–927 are compositionally biased toward basic residues; that stretch reads RAKRRGASARSGSKAKRGKRR.

The protein belongs to the SecA family. As to quaternary structure, monomer and homodimer. Part of the essential Sec protein translocation apparatus which comprises SecA, SecYEG and auxiliary proteins SecDF. Other proteins may also be involved.

Its subcellular location is the cell membrane. It is found in the cytoplasm. The enzyme catalyses ATP + H2O + cellular proteinSide 1 = ADP + phosphate + cellular proteinSide 2.. Its function is as follows. Part of the Sec protein translocase complex. Interacts with the SecYEG preprotein conducting channel. Has a central role in coupling the hydrolysis of ATP to the transfer of proteins into and across the cell membrane, serving as an ATP-driven molecular motor driving the stepwise translocation of polypeptide chains across the membrane. The chain is Protein translocase subunit SecA from Kocuria rhizophila (strain ATCC 9341 / DSM 348 / NBRC 103217 / DC2201).